The chain runs to 298 residues: GTP cyclohydrolase FolE2 (298 aa).

It belongs to the GTP cyclohydrolase IV family.

The enzyme catalyses GTP + H2O = 7,8-dihydroneopterin 3'-triphosphate + formate + H(+). It participates in cofactor biosynthesis; 7,8-dihydroneopterin triphosphate biosynthesis; 7,8-dihydroneopterin triphosphate from GTP: step 1/1. Functionally, converts GTP to 7,8-dihydroneopterin triphosphate. The sequence is that of GTP cyclohydrolase FolE2 from Pseudomonas paraeruginosa (strain DSM 24068 / PA7) (Pseudomonas aeruginosa (strain PA7)).